The primary structure comprises 545 residues: T-complex protein 1 subunit gamma (545 aa).

M1 carries the N-acetylmethionine modification. The segment at 1–24 (MMGHRPVLVLSQNTKRESGRKVQS) is disordered. S11 carries the post-translational modification Phosphoserine. A Glycyl lysine isopeptide (Lys-Gly) (interchain with G-Cter in SUMO2) cross-link involves residue K15. G42, G94, T95, T96, S97, T162, and K163 together coordinate ADP. Positions 42, 94, 95, and 96 each coordinate ATP. S170 is subject to Phosphoserine. An N6-acetyllysine modification is found at K222. Residues S243 and S244 each carry the phosphoserine modification. Y247 is modified (phosphotyrosine). Glycyl lysine isopeptide (Lys-Gly) (interchain with G-Cter in SUMO2) cross-links involve residues K248 and K249. S252 carries the phosphoserine modification. C366 and C372 are disulfide-bonded. Residue K381 forms a Glycyl lysine isopeptide (Lys-Gly) (interchain with G-Cter in SUMO2) linkage. G411 contributes to the ADP binding site. G411 provides a ligand contact to ATP. Phosphothreonine is present on residues T430 and T459. Residues G482, E483, E497, and K502 each contribute to the ADP site. G482 lines the ATP pocket. Residue E497 coordinates ATP. Residues 526-545 (HKKKGDDQSRQGGAPDAGQE) are disordered.

It belongs to the TCP-1 chaperonin family. In terms of assembly, component of the chaperonin-containing T-complex (TRiC), a hexadecamer composed of two identical back-to-back stacked rings enclosing a protein folding chamber. Each ring is made up of eight different subunits: TCP1/CCT1, CCT2, CCT3, CCT4, CCT5, CCT6A/CCT6, CCT7, CCT8. Interacts with PACRG. Interacts with DNAAF4. Interacts with DLEC1.

The protein localises to the cytoplasm. The enzyme catalyses ATP + H2O = ADP + phosphate + H(+). Its function is as follows. Component of the chaperonin-containing T-complex (TRiC), a molecular chaperone complex that assists the folding of actin, tubulin and other proteins upon ATP hydrolysis. The TRiC complex mediates the folding of WRAP53/TCAB1, thereby regulating telomere maintenance. As part of the TRiC complex may play a role in the assembly of BBSome, a complex involved in ciliogenesis regulating transports vesicles to the cilia. This Macaca fascicularis (Crab-eating macaque) protein is T-complex protein 1 subunit gamma (CCT3).